The sequence spans 147 residues: Secreted RxLR effector protein BLN04 (147 aa).

Residues 1–23 (MATMRRICFLFVFNLAVATSTQG) form the signal peptide. A dEER motif is present at residues 58–61 (SEER). The chain crosses the membrane as a helical span at residues 117–137 (VYIYTILFLSIPIILGVAMYI).

This sequence belongs to the RxLR effector family. In terms of assembly, interacts with host transcription factor NAC069.

Its subcellular location is the secreted. The protein resides in the host membrane. Functionally, secreted effector that inhibits stress-induced relocalization of the transcription factor NAC069 to the nucleus, thus affecting its broad role in abiotic and biotic stress responses. The sequence is that of Secreted RxLR effector protein BLN04 from Bremia lactucae (Lettuce downy mildew).